We begin with the raw amino-acid sequence, 562 residues long: SPI-1 type 3 secretion system secretin (562 aa).

An N-terminal signal peptide occupies residues 1–24 (MKTHILLARVLACAALVLVTPGYS).

The protein belongs to the bacterial secretin family. T3SS SctC subfamily. As to quaternary structure, the core secretion machinery of the T3SS is composed of approximately 20 different proteins, including cytoplasmic components, a base, an export apparatus and a needle. This subunit is part of the base, which anchors the injectisome in the bacterial cell envelope. Forms a stable homooligomeric complex. The complex is composed of 15 subunits.

It localises to the cell outer membrane. Its function is as follows. Component of the type III secretion system (T3SS), also called injectisome, which is used to inject bacterial effector proteins into eukaryotic host cells. Forms a ring-shaped multimeric structure with an apparent central pore in the outer membrane. The chain is SPI-1 type 3 secretion system secretin from Salmonella typhimurium (strain LT2 / SGSC1412 / ATCC 700720).